Reading from the N-terminus, the 282-residue chain is Phosphatidylserine decarboxylase proenzyme (282 aa).

Residues Asp88, His144, and Ser247 each act as charge relay system; for autoendoproteolytic cleavage activity in the active site. Ser247 (schiff-base intermediate with substrate; via pyruvic acid; for decarboxylase activity) is an active-site residue. Ser247 carries the pyruvic acid (Ser); by autocatalysis modification.

This sequence belongs to the phosphatidylserine decarboxylase family. PSD-B subfamily. Prokaryotic type I sub-subfamily. As to quaternary structure, heterodimer of a large membrane-associated beta subunit and a small pyruvoyl-containing alpha subunit. The cofactor is pyruvate. Is synthesized initially as an inactive proenzyme. Formation of the active enzyme involves a self-maturation process in which the active site pyruvoyl group is generated from an internal serine residue via an autocatalytic post-translational modification. Two non-identical subunits are generated from the proenzyme in this reaction, and the pyruvate is formed at the N-terminus of the alpha chain, which is derived from the carboxyl end of the proenzyme. The autoendoproteolytic cleavage occurs by a canonical serine protease mechanism, in which the side chain hydroxyl group of the serine supplies its oxygen atom to form the C-terminus of the beta chain, while the remainder of the serine residue undergoes an oxidative deamination to produce ammonia and the pyruvoyl prosthetic group on the alpha chain. During this reaction, the Ser that is part of the protease active site of the proenzyme becomes the pyruvoyl prosthetic group, which constitutes an essential element of the active site of the mature decarboxylase.

The protein localises to the cell membrane. The enzyme catalyses a 1,2-diacyl-sn-glycero-3-phospho-L-serine + H(+) = a 1,2-diacyl-sn-glycero-3-phosphoethanolamine + CO2. It participates in phospholipid metabolism; phosphatidylethanolamine biosynthesis; phosphatidylethanolamine from CDP-diacylglycerol: step 2/2. Its function is as follows. Catalyzes the formation of phosphatidylethanolamine (PtdEtn) from phosphatidylserine (PtdSer). This is Phosphatidylserine decarboxylase proenzyme from Xanthomonas campestris pv. campestris (strain B100).